A 443-amino-acid chain; its full sequence is Thymidine phosphorylase (443 aa).

The protein belongs to the thymidine/pyrimidine-nucleoside phosphorylase family. In terms of assembly, homodimer.

The catalysed reaction is thymidine + phosphate = 2-deoxy-alpha-D-ribose 1-phosphate + thymine. It participates in pyrimidine metabolism; dTMP biosynthesis via salvage pathway; dTMP from thymine: step 1/2. Functionally, the enzymes which catalyze the reversible phosphorolysis of pyrimidine nucleosides are involved in the degradation of these compounds and in their utilization as carbon and energy sources, or in the rescue of pyrimidine bases for nucleotide synthesis. This Shewanella sp. (strain ANA-3) protein is Thymidine phosphorylase.